Reading from the N-terminus, the 223-residue chain is Deoxyribose-phosphate aldolase (223 aa).

D91 functions as the Proton donor/acceptor in the catalytic mechanism. The Schiff-base intermediate with acetaldehyde role is filled by K153. Residue K182 is the Proton donor/acceptor of the active site.

Belongs to the DeoC/FbaB aldolase family. DeoC type 1 subfamily.

The protein localises to the cytoplasm. The enzyme catalyses 2-deoxy-D-ribose 5-phosphate = D-glyceraldehyde 3-phosphate + acetaldehyde. It functions in the pathway carbohydrate degradation; 2-deoxy-D-ribose 1-phosphate degradation; D-glyceraldehyde 3-phosphate and acetaldehyde from 2-deoxy-alpha-D-ribose 1-phosphate: step 2/2. Its function is as follows. Catalyzes a reversible aldol reaction between acetaldehyde and D-glyceraldehyde 3-phosphate to generate 2-deoxy-D-ribose 5-phosphate. The sequence is that of Deoxyribose-phosphate aldolase from Streptococcus pyogenes serotype M4 (strain MGAS10750).